We begin with the raw amino-acid sequence, 555 residues long: Vacuolar fusion protein MON1 homolog A (555 aa).

Residues Met1–Glu12 show a composition bias toward basic and acidic residues. Residues Met1 to Met87 form a disordered region. 2 positions are modified to phosphoserine: Ser31 and Ser56. Phosphothreonine is present on Thr61. The residue at position 91 (Ser91) is a Phosphoserine. Positions Pro114–Ala147 are disordered.

It belongs to the MON1/SAND family. As to quaternary structure, interacts with CCZ1. Found in a complex with RMC1, CCZ1, MON1A and MON1B. The MON1A-CCZ1B complex interacts with RIMOC1. The MON1A-CCZ1B complex interacts with RAB7A and this interaction is enhanced in the presence of RIMOC1.

Functionally, plays an important role in membrane trafficking through the secretory apparatus. Not involved in endocytic trafficking to lysosomes. Acts in concert with CCZ1, as a guanine exchange factor (GEF) for RAB7, promotes the exchange of GDP to GTP, converting it from an inactive GDP-bound form into an active GTP-bound form. The polypeptide is Vacuolar fusion protein MON1 homolog A (MON1A) (Macaca fascicularis (Crab-eating macaque)).